The chain runs to 183 residues: A-type ATP synthase subunit E (183 aa).

The protein belongs to the V-ATPase E subunit family. In terms of assembly, has multiple subunits with at least A(3), B(3), C, D, E, F, H, I and proteolipid K(x).

It is found in the cell membrane. In terms of biological role, component of the A-type ATP synthase that produces ATP from ADP in the presence of a proton gradient across the membrane. In Methanosarcina acetivorans (strain ATCC 35395 / DSM 2834 / JCM 12185 / C2A), this protein is A-type ATP synthase subunit E.